A 183-amino-acid polypeptide reads, in one-letter code: uncharacterized protein (183 aa).

The signal sequence occupies residues 1–17 (MVLFILVLYTCIQDGNG).

This is an uncharacterized protein from Saccharomyces cerevisiae (strain ATCC 204508 / S288c) (Baker's yeast).